The primary structure comprises 216 residues: N-glycosylase/DNA lyase (216 aa).

8-oxoguanine-binding residues include Gln27, Ser48, and Trp59. The tract at residues 106 to 170 (EHYYENMVAL…LDYRLKKINP (65 aa)) is helix-hairpin-helix. Lys130 functions as the Schiff-base intermediate with DNA in the catalytic mechanism. Phe134 and Pro160 together coordinate 8-oxoguanine. Asp162 is a catalytic residue. 8-oxoguanine is bound by residues Asp190 and Trp194.

It belongs to the archaeal N-glycosylase/DNA lyase (AGOG) family.

The enzyme catalyses 2'-deoxyribonucleotide-(2'-deoxyribose 5'-phosphate)-2'-deoxyribonucleotide-DNA = a 3'-end 2'-deoxyribonucleotide-(2,3-dehydro-2,3-deoxyribose 5'-phosphate)-DNA + a 5'-end 5'-phospho-2'-deoxyribonucleoside-DNA + H(+). Functionally, DNA repair enzyme that is part of the base excision repair (BER) pathway; protects from oxidative damage by removing the major product of DNA oxidation, 8-oxoguanine (GO), from single- and double-stranded DNA substrates. In Nanoarchaeum equitans (strain Kin4-M), this protein is N-glycosylase/DNA lyase.